Consider the following 510-residue polypeptide: D-alanine--D-alanyl carrier protein ligase (510 aa).

157 to 158 is a binding site for ATP; the sequence is TS. Residue Asp-202 participates in D-alanine binding. Position 297-302 (297-302) interacts with ATP; sequence NTYGPT. D-alanine is bound at residue Val-306. ATP-binding residues include Asp-389 and Lys-498. D-alanine is bound at residue Lys-498.

This sequence belongs to the ATP-dependent AMP-binding enzyme family. DltA subfamily.

Its subcellular location is the cytoplasm. The catalysed reaction is holo-[D-alanyl-carrier protein] + D-alanine + ATP = D-alanyl-[D-alanyl-carrier protein] + AMP + diphosphate. It functions in the pathway cell wall biogenesis; lipoteichoic acid biosynthesis. Functionally, catalyzes the first step in the D-alanylation of lipoteichoic acid (LTA), the activation of D-alanine and its transfer onto the D-alanyl carrier protein (Dcp) DltC. In an ATP-dependent two-step reaction, forms a high energy D-alanyl-AMP intermediate, followed by transfer of the D-alanyl residue as a thiol ester to the phosphopantheinyl prosthetic group of the Dcp. D-alanylation of LTA plays an important role in modulating the properties of the cell wall in Gram-positive bacteria, influencing the net charge of the cell wall. In Listeria monocytogenes serotype 4b (strain F2365), this protein is D-alanine--D-alanyl carrier protein ligase.